A 1556-amino-acid chain; its full sequence is Pentafunctional AROM polypeptide (1556 aa).

Residues 1–387 (MFAEGQIQKV…HEQKASSVAD (387 aa)) form a 3-dehydroquinate synthase region. Residues 46 to 48 (DTN), 84 to 87 (ETSK), 115 to 117 (GGV), and Asp-120 each bind NAD(+). Residue Arg-131 coordinates 7-phospho-2-dehydro-3-deoxy-D-arabino-heptonate. 140-141 (TT) is an NAD(+) binding site. 7-phospho-2-dehydro-3-deoxy-D-arabino-heptonate-binding residues include Asp-147 and Lys-153. Lys-162 serves as a coordination point for NAD(+). Residue Asn-163 participates in 7-phospho-2-dehydro-3-deoxy-D-arabino-heptonate binding. NAD(+) contacts are provided by residues 180 to 183 (FLET) and Asn-191. A Zn(2+)-binding site is contributed by Glu-195. 7-phospho-2-dehydro-3-deoxy-D-arabino-heptonate-binding positions include 195 to 198 (EVIK) and Lys-253. The Proton acceptor; for 3-dehydroquinate synthase activity role is filled by Glu-263. 7-phospho-2-dehydro-3-deoxy-D-arabino-heptonate-binding positions include 267–271 (RNLLN) and His-274. His-274 provides a ligand contact to Zn(2+). His-278 acts as the Proton acceptor; for 3-dehydroquinate synthase activity in catalysis. 7-phospho-2-dehydro-3-deoxy-D-arabino-heptonate contacts are provided by His-290 and Lys-359. Position 290 (His-290) interacts with Zn(2+). Positions 400 to 837 (VGEAPVGDKK…WDVLSGVFNV (438 aa)) are EPSP synthase. Cys-819 serves as the catalytic For EPSP synthase activity. The tract at residues 858–1049 (PSIFIVGMRG…HKDQFTSFLS (192 aa)) is shikimate kinase. 864–871 (GMRGAGKT) is a binding site for ATP. The interval 1050-1266 (LTFPDVSIAA…AAPGQLSVEE (217 aa)) is 3-dehydroquinase. Catalysis depends on His-1171, which acts as the Proton acceptor; for 3-dehydroquinate dehydratase activity. Catalysis depends on Lys-1200, which acts as the Schiff-base intermediate with substrate; for 3-dehydroquinate dehydratase activity. The interval 1279 to 1556 (KNLSFFIVGT…EVGEKAVLGN (278 aa)) is shikimate dehydrogenase.

It in the N-terminal section; belongs to the sugar phosphate cyclases superfamily. Dehydroquinate synthase family. The protein in the 2nd section; belongs to the EPSP synthase family. In the 3rd section; belongs to the shikimate kinase family. This sequence in the 4th section; belongs to the type-I 3-dehydroquinase family. It in the C-terminal section; belongs to the shikimate dehydrogenase family. In terms of assembly, homodimer. It depends on Zn(2+) as a cofactor.

It is found in the cytoplasm. It carries out the reaction 7-phospho-2-dehydro-3-deoxy-D-arabino-heptonate = 3-dehydroquinate + phosphate. It catalyses the reaction 3-dehydroquinate = 3-dehydroshikimate + H2O. The enzyme catalyses shikimate + NADP(+) = 3-dehydroshikimate + NADPH + H(+). The catalysed reaction is shikimate + ATP = 3-phosphoshikimate + ADP + H(+). It carries out the reaction 3-phosphoshikimate + phosphoenolpyruvate = 5-O-(1-carboxyvinyl)-3-phosphoshikimate + phosphate. It participates in metabolic intermediate biosynthesis; chorismate biosynthesis; chorismate from D-erythrose 4-phosphate and phosphoenolpyruvate: step 2/7. Its pathway is metabolic intermediate biosynthesis; chorismate biosynthesis; chorismate from D-erythrose 4-phosphate and phosphoenolpyruvate: step 3/7. It functions in the pathway metabolic intermediate biosynthesis; chorismate biosynthesis; chorismate from D-erythrose 4-phosphate and phosphoenolpyruvate: step 4/7. The protein operates within metabolic intermediate biosynthesis; chorismate biosynthesis; chorismate from D-erythrose 4-phosphate and phosphoenolpyruvate: step 5/7. It participates in metabolic intermediate biosynthesis; chorismate biosynthesis; chorismate from D-erythrose 4-phosphate and phosphoenolpyruvate: step 6/7. Its function is as follows. The AROM polypeptide catalyzes 5 consecutive enzymatic reactions in prechorismate polyaromatic amino acid biosynthesis. The polypeptide is Pentafunctional AROM polypeptide (Yarrowia lipolytica (strain CLIB 122 / E 150) (Yeast)).